The following is a 152-amino-acid chain: Deoxyuridine 5'-triphosphate nucleotidohydrolase (152 aa).

Substrate is bound by residues 71–73 (RSG), Asn-84, 88–90 (LID), and Met-98.

It belongs to the dUTPase family. Mg(2+) serves as cofactor.

The enzyme catalyses dUTP + H2O = dUMP + diphosphate + H(+). The protein operates within pyrimidine metabolism; dUMP biosynthesis; dUMP from dCTP (dUTP route): step 2/2. This enzyme is involved in nucleotide metabolism: it produces dUMP, the immediate precursor of thymidine nucleotides and it decreases the intracellular concentration of dUTP so that uracil cannot be incorporated into DNA. The protein is Deoxyuridine 5'-triphosphate nucleotidohydrolase of Shewanella sediminis (strain HAW-EB3).